A 380-amino-acid chain; its full sequence is Histone deacetylase-like amidohydrolase (380 aa).

The active-site Proton donor/acceptor is His144. The Zn(2+) site is built by Asp181, His183, and Asp269.

This sequence belongs to the histone deacetylase family. As to quaternary structure, homotetramer; dimer of head-to-head dimers. Zn(2+) serves as cofactor.

Is inhibited by azobenzenes, stilbenes and arylazopyrazoles. In terms of biological role, probable protein deacetylase that catalyzes deacetylation of acetylated lysine residues. In vitro, exhibits high activity against artificial HDAC (histone deacetylase) substrates containing acetylated and trifluoroacetylated lysine residues. Is not able to deacetylate acetylated polyamines. In Pseudomonas aeruginosa (strain ATCC 15692 / DSM 22644 / CIP 104116 / JCM 14847 / LMG 12228 / 1C / PRS 101 / PAO1), this protein is Histone deacetylase-like amidohydrolase.